Consider the following 256-residue polypeptide: Imidazole glycerol phosphate synthase subunit HisF (256 aa).

Active-site residues include Asp12 and Asp131.

This sequence belongs to the HisA/HisF family. As to quaternary structure, heterodimer of HisH and HisF.

Its subcellular location is the cytoplasm. The enzyme catalyses 5-[(5-phospho-1-deoxy-D-ribulos-1-ylimino)methylamino]-1-(5-phospho-beta-D-ribosyl)imidazole-4-carboxamide + L-glutamine = D-erythro-1-(imidazol-4-yl)glycerol 3-phosphate + 5-amino-1-(5-phospho-beta-D-ribosyl)imidazole-4-carboxamide + L-glutamate + H(+). The protein operates within amino-acid biosynthesis; L-histidine biosynthesis; L-histidine from 5-phospho-alpha-D-ribose 1-diphosphate: step 5/9. In terms of biological role, IGPS catalyzes the conversion of PRFAR and glutamine to IGP, AICAR and glutamate. The HisF subunit catalyzes the cyclization activity that produces IGP and AICAR from PRFAR using the ammonia provided by the HisH subunit. This is Imidazole glycerol phosphate synthase subunit HisF from Ectopseudomonas mendocina (strain ymp) (Pseudomonas mendocina).